A 306-amino-acid chain; its full sequence is tRNA pseudouridine synthase B (306 aa).

Residue aspartate 48 is the Nucleophile of the active site.

It belongs to the pseudouridine synthase TruB family. Type 1 subfamily.

It carries out the reaction uridine(55) in tRNA = pseudouridine(55) in tRNA. Responsible for synthesis of pseudouridine from uracil-55 in the psi GC loop of transfer RNAs. The sequence is that of tRNA pseudouridine synthase B from Ectopseudomonas mendocina (strain ymp) (Pseudomonas mendocina).